The sequence spans 80 residues: Peroxidase (80 aa).

The tract at residues 56–80 is disordered; the sequence is DANEAEANSDLPGFNSSRSELEAAF. Pro67 provides a ligand contact to substrate. N-linked (GlcNAc...) asparagine glycosylation occurs at Asn70.

This sequence belongs to the peroxidase family. Classical plant (class III) peroxidase subfamily. Ca(2+) is required as a cofactor. The cofactor is heme b.

It catalyses the reaction 2 a phenolic donor + H2O2 = 2 a phenolic radical donor + 2 H2O. Removal of H(2)O(2), oxidation of toxic reductants, biosynthesis and degradation of lignin, suberization, auxin catabolism, response to environmental stresses such as wounding, pathogen attack and oxidative stress. These functions might be dependent on each isozyme/isoform in each plant tissue. The protein is Peroxidase of Triticum aestivum (Wheat).